A 710-amino-acid chain; its full sequence is Solute carrier family 15 member 1 (710 aa).

Residues Met-1–Val-21 form a helical membrane-spanning segment. The Extracellular portion of the chain corresponds to Asn-22–Thr-53. Residues Ala-54–Ala-74 form a helical membrane-spanning segment. Residues Asp-75–Lys-82 are Cytoplasmic-facing. A helical membrane pass occupies residues Thr-83–Ile-103. Residues Asn-104–Leu-118 lie on the Extracellular side of the membrane. Residues Pro-119–Ile-139 form a helical membrane-spanning segment. At Lys-140–Arg-161 the chain is on the cytoplasmic side. The chain crosses the membrane as a helical span at residues Phe-162–Pro-182. The Extracellular segment spans residues Ile-183 to Tyr-198. A helical transmembrane segment spans residues Pro-199–Gly-219. At Ser-220 to Gln-276 the chain is on the cytoplasmic side. A helical transmembrane segment spans residues Ile-277–Phe-297. Residues Asp-298–Thr-327 are Extracellular-facing. The chain crosses the membrane as a helical span at residues Val-328–Ile-348. The Cytoplasmic segment spans residues Ala-349–Met-361. A helical membrane pass occupies residues Thr-362–Ile-382. Residues Asp-383 to Gln-586 lie on the Extracellular side of the membrane. The tract at residues Asp-383–Gln-586 is extracellular domain (ECD). Asn-415, Asn-439, Asn-510, Asn-532, and Asn-539 each carry an N-linked (GlcNAc...) asparagine glycan. A helical membrane pass occupies residues Ile-587–Phe-607. Residues Ser-608–Gln-621 are Cytoplasmic-facing. The chain crosses the membrane as a helical span at residues Ala-622–Gly-642. The Extracellular portion of the chain corresponds to His-643–Gln-647. Residues Trp-648–Met-668 form a helical membrane-spanning segment. At Ala-669–Met-710 the chain is on the cytoplasmic side. The interval Asp-687 to Met-710 is disordered. Residues Pro-698–Met-710 are compositionally biased toward polar residues.

Belongs to the major facilitator superfamily. Proton-dependent oligopeptide transporter (POT/PTR) (TC 2.A.17) family. Interacts (via extracellular domain region) with trypsin. As to expression, highly expressed in small intestine. In terms of tissue distribution, expression is restricted to pinealocytes.

The protein localises to the apical cell membrane. It carries out the reaction a dipeptide(out) + H(+)(out) = a dipeptide(in) + H(+)(in). It catalyses the reaction an L-amino acid tripeptide(out) + H(+)(out) = an L-amino acid tripeptide(in) + H(+)(in). The enzyme catalyses L-alanyl-L-lysine(out) + H(+)(out) = L-alanyl-L-lysine(in) + H(+)(in). The catalysed reaction is L-alanyl-L-proline(out) + H(+)(out) = L-alanyl-L-proline(in) + H(+)(in). It carries out the reaction L-alanyl-L-valine(out) + H(+)(out) = L-alanyl-L-valine(in) + H(+)(in). It catalyses the reaction carnosine(out) + H(+)(out) = carnosine(in) + H(+)(in). The enzyme catalyses glycyl-L-glutamine(out) + H(+)(out) = glycyl-L-glutamine(in) + H(+)(in). The catalysed reaction is glycyl-L-leucine(out) + H(+)(out) = glycyl-L-leucine(in) + H(+)(in). It carries out the reaction glycyl-L-proline(out) + H(+)(out) = glycyl-L-proline(in) + H(+)(in). It catalyses the reaction glycyl-sarcosine(out) + H(+)(out) = glycyl-sarcosine(in) + H(+)(in). The enzyme catalyses L-leucyl-L-leucine(out) + H(+)(out) = L-leucyl-L-leucine(in) + H(+)(in). The catalysed reaction is L-leucyl-L-proline(out) + H(+)(out) = L-leucyl-L-proline(in) + H(+)(in). It carries out the reaction L-phenylalanyl-L-leucine(out) + H(+)(out) = L-phenylalanyl-L-leucine(in) + H(+)(in). It catalyses the reaction L-phenylalanyl-L-phenylalanine(out) + H(+)(out) = L-phenylalanyl-L-phenylalanine(in) + H(+)(in). The enzyme catalyses L-lysyl-glycine(out) + H(+)(out) = L-lysyl-glycine(in) + H(+)(in). The catalysed reaction is L-tyrosylglycine(out) + H(+)(out) = L-tyrosylglycine(in) + H(+)(in). It carries out the reaction L-alanyl-L-aspartate(out) + 2 H(+)(out) = L-alanyl-L-aspartate(in) + 2 H(+)(in). It catalyses the reaction L-aspartyl-glycine(out) + 2 H(+)(out) = L-aspartyl-glycine(in) + 2 H(+)(in). The enzyme catalyses glycyl-L-aspartate(out) + 2 H(+)(out) = glycyl-L-aspartate(in) + 2 H(+)(in). The catalysed reaction is glycyl-L-glutamate(out) + 2 H(+)(out) = glycyl-L-glutamate(in) + 2 H(+)(in). It carries out the reaction L-alanyl-L-leucyl-L-alanine(out) + H(+)(out) = L-alanyl-L-leucyl-L-alanine(in) + H(+)(in). It catalyses the reaction L-alanyl-L-prolylglycine(out) + H(+)(out) = L-alanyl-L-prolylglycine(in) + H(+)(in). The enzyme catalyses glycylglycyl-L-isoleucine(out) + H(+)(out) = glycylglycyl-L-isoleucine(in) + H(+)(in). The catalysed reaction is glycylglycyl-L-proline(out) + H(+)(out) = glycylglycyl-L-proline(in) + H(+)(in). It carries out the reaction L-methionyl-L-phenylalanyl-L-methionine(out) + H(+)(out) = L-methionyl-L-phenylalanyl-L-methionine(in) + H(+)(in). It catalyses the reaction N-acetyl-D-muramoyl-L-alanyl-D-isoglutamine(out) + 2 H(+)(out) = N-acetyl-D-muramoyl-L-alanyl-D-isoglutamine(in) + 2 H(+)(in). The enzyme catalyses N(alpha)-formyl-L-methionyl-L-leucyl-L-phenylalanine(out) + 2 H(+)(out) = N(alpha)-formyl-L-methionyl-L-leucyl-L-phenylalanine(in) + 2 H(+)(in). In terms of biological role, electrogenic proton-coupled amino-acid transporter that transports oligopeptides of 2 to 4 amino acids with a preference for dipeptides. Transports neutral and monovalently charged peptides with a proton to peptide stoichiometry of 1:1 or 2:1. Primarily responsible for the absorption of dietary di- and tripeptides from the small intestinal lumen. Mediates transepithelial transport of muramyl and N-formylated bacterial dipeptides contributing to recognition of pathogenic bacteria by the mucosal immune system. In Rattus norvegicus (Rat), this protein is Solute carrier family 15 member 1 (Slc15a1).